Here is a 233-residue protein sequence, read N- to C-terminus: Small ribosomal subunit protein uS3 (233 aa).

Positions 39–107 (VRQFLMKKLV…PAQINISEVR (69 aa)) constitute a KH type-2 domain.

It belongs to the universal ribosomal protein uS3 family. In terms of assembly, part of the 30S ribosomal subunit. Forms a tight complex with proteins S10 and S14.

Its function is as follows. Binds the lower part of the 30S subunit head. Binds mRNA in the 70S ribosome, positioning it for translation. This is Small ribosomal subunit protein uS3 from Buchnera aphidicola subsp. Schizaphis graminum (strain Sg).